A 141-amino-acid polypeptide reads, in one-letter code: Transcription antitermination protein NusB (141 aa).

This sequence belongs to the NusB family.

Involved in transcription antitermination. Required for transcription of ribosomal RNA (rRNA) genes. Binds specifically to the boxA antiterminator sequence of the ribosomal RNA (rrn) operons. The polypeptide is Transcription antitermination protein NusB (Desulfotalea psychrophila (strain LSv54 / DSM 12343)).